Reading from the N-terminus, the 500-residue chain is AMP phosphorylase (500 aa).

AMP-binding positions include Gly166, 192–197 (SRAVTS), and Thr201. The active-site Proton donor is the Asp254. AMP contacts are provided by Ser262 and Lys286.

Belongs to the thymidine/pyrimidine-nucleoside phosphorylase family. Type 2 subfamily.

It catalyses the reaction AMP + phosphate = alpha-D-ribose 1,5-bisphosphate + adenine. It carries out the reaction CMP + phosphate = cytosine + alpha-D-ribose 1,5-bisphosphate. The catalysed reaction is UMP + phosphate = alpha-D-ribose 1,5-bisphosphate + uracil. Its function is as follows. Catalyzes the conversion of AMP and phosphate to adenine and ribose 1,5-bisphosphate (R15P). Exhibits phosphorylase activity toward CMP and UMP in addition to AMP. Functions in an archaeal AMP degradation pathway, together with R15P isomerase and RubisCO. This chain is AMP phosphorylase (deoA), found in Natronomonas pharaonis (strain ATCC 35678 / DSM 2160 / CIP 103997 / JCM 8858 / NBRC 14720 / NCIMB 2260 / Gabara) (Halobacterium pharaonis).